We begin with the raw amino-acid sequence, 255 residues long: Hemin import ATP-binding protein HmuV (255 aa).

The ABC transporter domain maps to 2 to 238 (LRVENLHVRR…EPLKAVFGLE (237 aa)). 34–41 (GPNGAGKS) contributes to the ATP binding site.

The protein belongs to the ABC transporter superfamily. Heme (hemin) importer (TC 3.A.1.14.5) family. In terms of assembly, the complex is composed of two ATP-binding proteins (HmuV), two transmembrane proteins (HmuU) and a solute-binding protein (HmuT).

It is found in the cell inner membrane. Functionally, part of the ABC transporter complex HmuTUV involved in hemin import. Responsible for energy coupling to the transport system. The sequence is that of Hemin import ATP-binding protein HmuV from Pseudomonas fluorescens (strain ATCC BAA-477 / NRRL B-23932 / Pf-5).